The following is a 93-amino-acid chain: Large ribosomal subunit protein uL23cy (93 aa).

This sequence belongs to the universal ribosomal protein uL23 family. Part of the 50S ribosomal subunit.

The protein resides in the plastid. It localises to the chloroplast. Its function is as follows. Binds to 23S rRNA. In Sorghum bicolor (Sorghum), this protein is Large ribosomal subunit protein uL23cy (rpl23-B).